We begin with the raw amino-acid sequence, 314 residues long: Methionyl-tRNA formyltransferase (314 aa).

Residue 112–115 coordinates (6S)-5,6,7,8-tetrahydrofolate; it reads SLLP.

It belongs to the Fmt family.

It carries out the reaction L-methionyl-tRNA(fMet) + (6R)-10-formyltetrahydrofolate = N-formyl-L-methionyl-tRNA(fMet) + (6S)-5,6,7,8-tetrahydrofolate + H(+). Its function is as follows. Attaches a formyl group to the free amino group of methionyl-tRNA(fMet). The formyl group appears to play a dual role in the initiator identity of N-formylmethionyl-tRNA by promoting its recognition by IF2 and preventing the misappropriation of this tRNA by the elongation apparatus. This is Methionyl-tRNA formyltransferase from Buchnera aphidicola subsp. Acyrthosiphon pisum (strain 5A).